The primary structure comprises 316 residues: MTLRIATVSLNSAVDQTVTVPGFTADAVNRVAASRIDAGGKGVNVASFLAHVGHGVAVTGLLGAENAALFARHFAATGLVDACQRLPGATRTNVKIVDPLQDQVTDLNFPGIAAGPADLDAVAATLTELLAQGLDWVALCGSLPAGIGAEAYAELAALARKGGARVALDTSGPALGLALAARPDIVKPNVAELGAHLGRTLTGLESVREAARDLAASGVGLVAVSMGAGGAVLVRGAEAVLAIPPATPIASTVGAGDAMVAGLIHAATLGLDLAETARLATAFSLGALGEIGPHLPPPERLAALARTVTVKTLPPV.

ATP contacts are provided by residues 225 to 230 and 256 to 257; these read SMGAGG and GD. Asp-257 (proton acceptor) is an active-site residue.

Belongs to the carbohydrate kinase PfkB family.

The enzyme catalyses beta-D-fructose 1-phosphate + ATP = beta-D-fructose 1,6-bisphosphate + ADP + H(+). Its function is as follows. Catalyzes the ATP-dependent phosphorylation of fructose-l-phosphate to fructose-l,6-bisphosphate. The polypeptide is 1-phosphofructokinase (Rhodobacter capsulatus (Rhodopseudomonas capsulata)).